We begin with the raw amino-acid sequence, 616 residues long: Dihydroxy-acid dehydratase (616 aa).

Residue Asp81 participates in Mg(2+) binding. A [2Fe-2S] cluster-binding site is contributed by Cys122. Mg(2+) contacts are provided by Asp123 and Lys124. Lys124 carries the post-translational modification N6-carboxylysine. Cys195 is a [2Fe-2S] cluster binding site. Glu491 provides a ligand contact to Mg(2+). The active-site Proton acceptor is the Ser517.

Belongs to the IlvD/Edd family. In terms of assembly, homodimer. The cofactor is [2Fe-2S] cluster. Mg(2+) serves as cofactor.

The catalysed reaction is (2R)-2,3-dihydroxy-3-methylbutanoate = 3-methyl-2-oxobutanoate + H2O. It carries out the reaction (2R,3R)-2,3-dihydroxy-3-methylpentanoate = (S)-3-methyl-2-oxopentanoate + H2O. It functions in the pathway amino-acid biosynthesis; L-isoleucine biosynthesis; L-isoleucine from 2-oxobutanoate: step 3/4. The protein operates within amino-acid biosynthesis; L-valine biosynthesis; L-valine from pyruvate: step 3/4. Functions in the biosynthesis of branched-chain amino acids. Catalyzes the dehydration of (2R,3R)-2,3-dihydroxy-3-methylpentanoate (2,3-dihydroxy-3-methylvalerate) into 2-oxo-3-methylpentanoate (2-oxo-3-methylvalerate) and of (2R)-2,3-dihydroxy-3-methylbutanoate (2,3-dihydroxyisovalerate) into 2-oxo-3-methylbutanoate (2-oxoisovalerate), the penultimate precursor to L-isoleucine and L-valine, respectively. The chain is Dihydroxy-acid dehydratase from Salmonella gallinarum (strain 287/91 / NCTC 13346).